The chain runs to 623 residues: MPHSDELDAGNVLAVENLNIAFMQDQQKIAAVRNLSFSLQRGETLAIVGESGSGKSVTALALMRLLEQAGGLVQCDKMLLQRRSREVIELSEQSAAQMRHVRGADMAMIFQEPMTSLNPVFTVGEQIAESIRLHQNASREEAMVEAKRMLDQVRIPEAQTILSRYPHQLSGGMRQRVMIAMALSCRPAVLIADEPTTALDVTIQAQILQLIKVLQKEMSMGVIFITHDMGVVAEIADRVLVMYQGEAVETGTVEQIFHAPQHPYTRALLAAVPQLGAMKGLDYPRRFPLISLEHPAKQAPPIEQKTVVDGEPVLRVRNLVTRFPLRSGLLNRVTREVHAVEKVSFDLWPGETLSLVGESGSGKSTTGRALLRLVESQGGEIIFNGQRIDTLSPGKLQALRRDIQFIFQDPYASLDPRQTIGDSIIEPLRVHGLLPGKDAAARVAWLLERVGLLPEHAWRYPHEFSGGQRQRICIARALALNPKVIIADEAVSALDVSIRGQIINLLLDLQRDFGIAYLFISHDMAVVERISHRVAVMYLGQIVEIGPRRAVFENPQHPYTRKLLAAVPVAEPSRQRPQRVLLSDDLPSNIHLRGEEVAAVSLQCVGPGHYVAQPQSEYAFMRR.

2 ABC transporter domains span residues 15 to 269 (VENL…RALL) and 314 to 564 (LRVR…RKLL). Residues 49–56 (GESGSGKS) and 357–364 (GESGSGKS) contribute to the ATP site.

It belongs to the ABC transporter superfamily. Glutathione importer (TC 3.A.1.5.11) family. The complex is composed of two ATP-binding proteins (GsiA), two transmembrane proteins (GsiC and GsiD) and a solute-binding protein (GsiB).

The protein localises to the cell inner membrane. The enzyme catalyses glutathione(out) + ATP + H2O = glutathione(in) + ADP + phosphate + H(+). Functionally, part of the ABC transporter complex GsiABCD involved in glutathione import. Responsible for energy coupling to the transport system. This is Glutathione import ATP-binding protein GsiA from Shigella sonnei (strain Ss046).